The following is a 404-amino-acid chain: LL-diaminopimelate aminotransferase (404 aa).

Y15 and G42 together coordinate substrate. Pyridoxal 5'-phosphate contacts are provided by residues Y72, 108–109 (AK), Y132, N188, Y219, and 247–249 (SFS). The substrate site is built by K109, Y132, and N188. K250 carries the post-translational modification N6-(pyridoxal phosphate)lysine. 2 residues coordinate pyridoxal 5'-phosphate: R258 and N288. 2 residues coordinate substrate: N288 and R384.

The protein belongs to the class-I pyridoxal-phosphate-dependent aminotransferase family. LL-diaminopimelate aminotransferase subfamily. As to quaternary structure, homodimer. It depends on pyridoxal 5'-phosphate as a cofactor.

The catalysed reaction is (2S,6S)-2,6-diaminopimelate + 2-oxoglutarate = (S)-2,3,4,5-tetrahydrodipicolinate + L-glutamate + H2O + H(+). Its pathway is amino-acid biosynthesis; L-lysine biosynthesis via DAP pathway; LL-2,6-diaminopimelate from (S)-tetrahydrodipicolinate (aminotransferase route): step 1/1. In terms of biological role, involved in the synthesis of meso-diaminopimelate (m-DAP or DL-DAP), required for both lysine and peptidoglycan biosynthesis. Catalyzes the direct conversion of tetrahydrodipicolinate to LL-diaminopimelate. This Lachnoclostridium phytofermentans (strain ATCC 700394 / DSM 18823 / ISDg) (Clostridium phytofermentans) protein is LL-diaminopimelate aminotransferase.